The sequence spans 148 residues: Ribonuclease P protein component (148 aa).

The tract at residues 119–148 (PLPAAPGTMPPARAPRPSSLSPTEPDPRSD) is disordered.

It belongs to the RnpA family. In terms of assembly, consists of a catalytic RNA component (M1 or rnpB) and a protein subunit.

The enzyme catalyses Endonucleolytic cleavage of RNA, removing 5'-extranucleotides from tRNA precursor.. Its function is as follows. RNaseP catalyzes the removal of the 5'-leader sequence from pre-tRNA to produce the mature 5'-terminus. It can also cleave other RNA substrates such as 4.5S RNA. The protein component plays an auxiliary but essential role in vivo by binding to the 5'-leader sequence and broadening the substrate specificity of the ribozyme. The sequence is that of Ribonuclease P protein component from Xanthomonas campestris pv. campestris (strain 8004).